Reading from the N-terminus, the 81-residue chain is NADH-ubiquinone oxidoreductase chain 6 (81 aa).

3 helical membrane-spanning segments follow: residues 1–21 (MTYF…GVAS), 27–47 (YGVV…LSLG), and 48–68 (VSFV…VVFV).

It belongs to the complex I subunit 6 family.

It is found in the mitochondrion membrane. The catalysed reaction is a ubiquinone + NADH + 5 H(+)(in) = a ubiquinol + NAD(+) + 4 H(+)(out). Its function is as follows. Core subunit of the mitochondrial membrane respiratory chain NADH dehydrogenase (Complex I) that is believed to belong to the minimal assembly required for catalysis. Complex I functions in the transfer of electrons from NADH to the respiratory chain. The immediate electron acceptor for the enzyme is believed to be ubiquinone. This Anas platyrhynchos (Mallard) protein is NADH-ubiquinone oxidoreductase chain 6 (MT-ND6).